A 148-amino-acid chain; its full sequence is Large ribosomal subunit protein bL9 (148 aa).

It belongs to the bacterial ribosomal protein bL9 family.

Binds to the 23S rRNA. The chain is Large ribosomal subunit protein bL9 from Hydrogenobaculum sp. (strain Y04AAS1).